The following is a 122-amino-acid chain: Ribosome-binding factor A (122 aa).

This sequence belongs to the RbfA family. As to quaternary structure, monomer. Binds 30S ribosomal subunits, but not 50S ribosomal subunits or 70S ribosomes.

The protein localises to the cytoplasm. Its function is as follows. One of several proteins that assist in the late maturation steps of the functional core of the 30S ribosomal subunit. Associates with free 30S ribosomal subunits (but not with 30S subunits that are part of 70S ribosomes or polysomes). Required for efficient processing of 16S rRNA. May interact with the 5'-terminal helix region of 16S rRNA. This is Ribosome-binding factor A from Burkholderia mallei (strain NCTC 10229).